Here is a 176-residue protein sequence, read N- to C-terminus: Ribosome maturation factor RimM (176 aa).

Residues 93–166 (ADEYYHADLI…QVVIEPPNEI (74 aa)) form the PRC barrel domain.

Belongs to the RimM family. Binds ribosomal protein uS19.

It localises to the cytoplasm. An accessory protein needed during the final step in the assembly of 30S ribosomal subunit, possibly for assembly of the head region. Essential for efficient processing of 16S rRNA. May be needed both before and after RbfA during the maturation of 16S rRNA. It has affinity for free ribosomal 30S subunits but not for 70S ribosomes. The protein is Ribosome maturation factor RimM of Rhodopseudomonas palustris (strain ATCC BAA-98 / CGA009).